Here is a 102-residue protein sequence, read N- to C-terminus: uncharacterized protein (102 aa).

The helical transmembrane segment at 5 to 27 threads the bilayer; it reads IYRSNLVIVITLFVSLSYYHTCF.

It is found in the host membrane. This is an uncharacterized protein from Microplitis demolitor (Parasitoid wasp).